Consider the following 642-residue polypeptide: A-kinase anchor protein 8-like (642 aa).

A sufficient for activation of CTE-mediated expression region spans residues 1–269; it reads MSYTGFVQGS…MRRTWKTWTT (269 aa). The residue at position 209 (Arg209) is an Asymmetric dimethylarginine; alternate. Omega-N-methylarginine; alternate is present on Arg209. Omega-N-methylarginine occurs at positions 218, 238, and 248. An N6-acetyllysine modification is found at Lys258. The disordered stretch occupies residues 265–382; sequence KTWTTADFRT…QDKQKKRQRD (118 aa). Phosphothreonine is present on Thr268. The Nuclear localization signal motif lies at 275 to 280; the sequence is KKKKRK. Positions 281–297 match the Nuclear export signal (NES) motif; sequence QGGSPDEPDSKATRTDC. Ser284 is subject to Phosphoserine. Positions 288–297 are enriched in basic and acidic residues; sequence PDSKATRTDC. Phosphothreonine is present on Thr293. Ser298 bears the Phosphoserine mark. The span at 299–315 shows a compositional bias: acidic residues; it reads DNSDSDNDEGTEGEAAE. The span at 338–350 shows a compositional bias: basic and acidic residues; that stretch reads EDGREEGKEDPEK. Positions 363–365 match the Nuclear localization signal motif; it reads KRK. 2 C2H2 AKAP95-type zinc fingers span residues 392–414 and 485–508; these read CSLC…SKFH and CAAC…TMDH. The tract at residues 546-642 is disordered; that stretch reads GENPFTDNPE…EDDEEGGGGP (97 aa). Residues 553–564 are compositionally biased toward acidic residues; sequence NPEEEKEQDEVE. The segment covering 585–605 has biased composition (pro residues); that stretch reads AQPPVPLEPAPGTTTPPPPPP. Residues 631–642 show a composition bias toward acidic residues; it reads DMEDDEEGGGGP.

Belongs to the AKAP95 family. Interacts (via N-terminus) with DHX9 (via RGG region). Interacts with TMPO isoform Beta, PRPF40A, RNF43, lamin-B. Interacts with HDAC3; increased during mitosis. In terms of processing, phosphorylated on serine or threonine residues possibly by PKA.

The protein resides in the nucleus. Its subcellular location is the nucleus matrix. It is found in the nucleus speckle. It localises to the PML body. The protein localises to the cytoplasm. Functionally, could play a role in constitutive transport element (CTE)-mediated gene expression by association with DHX9. Increases CTE-dependent nuclear unspliced mRNA export. Proposed to target PRKACA to the nucleus but does not seem to be implicated in the binding of regulatory subunit II of PKA. May be involved in nuclear envelope breakdown and chromatin condensation. May be involved in anchoring nuclear membranes to chromatin in interphase and in releasing membranes from chromating at mitosis. May regulate the initiation phase of DNA replication when associated with TMPO isoform Beta. Required for cell cycle G2/M transition and histone deacetylation during mitosis. In mitotic cells recruits HDAC3 to the vicinity of chromatin leading to deacetylation and subsequent phosphorylation at 'Ser-10' of histone H3; in this function seems to act redundantly with AKAP8. May be involved in regulation of pre-mRNA splicing. This Mus musculus (Mouse) protein is A-kinase anchor protein 8-like (Akap8l).